Here is a 364-residue protein sequence, read N- to C-terminus: MLTFPLINDTSRKIIHIDMDAFFASVEVRDNPSLKGKPVVIARNPLQTGGRGVVSTCSYEARAFGIHSAMSAKEAYDLCPQAIFISGNYEKYTKVSKQVREIFKRYTDNIEAASIDEAYLDVTENKIGAQSAIKIAKLIQHDIFVELGLTCSAGVSYNKFLAKIASDYEKPHGLTLIMPDEALEFLAKLPVEKFHGVGKATVPKLHALGFFTGGDLQKADPVDLAEKFGIYGWELFQKANGIHNSKVKNHRERKSVGKERTYGKLLYLPDDIKAELIKISKQVSESLKRHQLKGNIIILKLRYSDFTTLTKRKSMVENLDSPEDIAEAAQQIFEEIDYDESLGVRLLGVTVSGFGVQKATLDMQ.

Positions 14–198 (IIHIDMDAFF…LPVEKFHGVG (185 aa)) constitute a UmuC domain. Mg(2+) contacts are provided by Asp-18 and Asp-116. Glu-117 is an active-site residue.

It belongs to the DNA polymerase type-Y family. In terms of assembly, monomer. It depends on Mg(2+) as a cofactor.

The protein resides in the cytoplasm. The catalysed reaction is DNA(n) + a 2'-deoxyribonucleoside 5'-triphosphate = DNA(n+1) + diphosphate. Functionally, poorly processive, error-prone DNA polymerase involved in untargeted mutagenesis. Copies undamaged DNA at stalled replication forks, which arise in vivo from mismatched or misaligned primer ends. These misaligned primers can be extended by PolIV. Exhibits no 3'-5' exonuclease (proofreading) activity. May be involved in translesional synthesis, in conjunction with the beta clamp from PolIII. In Lactococcus lactis subsp. cremoris (strain SK11), this protein is DNA polymerase IV.